The primary structure comprises 312 residues: Ribosomal protein L11 methyltransferase (312 aa).

Residues threonine 162, glycine 183, aspartate 205, and asparagine 248 each contribute to the S-adenosyl-L-methionine site.

The protein belongs to the methyltransferase superfamily. PrmA family.

It is found in the cytoplasm. It catalyses the reaction L-lysyl-[protein] + 3 S-adenosyl-L-methionine = N(6),N(6),N(6)-trimethyl-L-lysyl-[protein] + 3 S-adenosyl-L-homocysteine + 3 H(+). Its function is as follows. Methylates ribosomal protein L11. This chain is Ribosomal protein L11 methyltransferase, found in Bacillus cereus (strain B4264).